A 149-amino-acid chain; its full sequence is Transcriptional repressor NrdR (149 aa).

The segment at 3 to 34 (CPFCSATDTKVIDSRLVADGHQVRRRRECAEC) is a zinc-finger region. One can recognise an ATP-cone domain in the interval 49–139 (PRVVKQDGSR…VYRAFEDVSE (91 aa)).

This sequence belongs to the NrdR family. Zn(2+) is required as a cofactor.

In terms of biological role, negatively regulates transcription of bacterial ribonucleotide reductase nrd genes and operons by binding to NrdR-boxes. In Shewanella woodyi (strain ATCC 51908 / MS32), this protein is Transcriptional repressor NrdR.